The following is a 108-amino-acid chain: Putative lipid-binding protein AIR1B (108 aa).

The signal sequence occupies residues 1-23 (MAPRTSLALFVSLNLLFFTCTSA). 3 disulfides stabilise this stretch: Cys-28–Cys-55, Cys-35–Cys-54, and Cys-71–Cys-107.

Belongs to the plant LTP family. PEARLI1 subfamily.

Its subcellular location is the secreted. This Arabidopsis thaliana (Mouse-ear cress) protein is Putative lipid-binding protein AIR1B (AIR1B).